The chain runs to 492 residues: Ribose import ATP-binding protein RbsA (492 aa).

2 ABC transporter domains span residues 3–239 (IDMR…VGRK) and 238–492 (RKLE…TGGK). ATP is bound at residue 35–42 (GENGAGKS).

The protein belongs to the ABC transporter superfamily. Ribose importer (TC 3.A.1.2.1) family. The complex is composed of an ATP-binding protein (RbsA), two transmembrane proteins (RbsC) and a solute-binding protein (RbsB).

It localises to the cell membrane. The catalysed reaction is D-ribose(out) + ATP + H2O = D-ribose(in) + ADP + phosphate + H(+). In terms of biological role, part of the ABC transporter complex RbsABC involved in ribose import. Responsible for energy coupling to the transport system. This is Ribose import ATP-binding protein RbsA from Streptococcus agalactiae serotype Ia (strain ATCC 27591 / A909 / CDC SS700).